A 427-amino-acid polypeptide reads, in one-letter code: G2/mitotic-specific cyclin-B1 (427 aa).

The tract at residues 33 to 126 (ATSKPGLRPR…DTPSPSPMET (94 aa)) is disordered. Lys-73 carries the post-translational modification N6-acetyllysine. Residues 100–110 (EPEHVKEDKLS) are compositionally biased toward basic and acidic residues. Residue Ser-120 is modified to Phosphoserine; by CDK1. Ser-122 carries the phosphoserine modification. Ser-127 bears the Phosphoserine; by PLK1 mark. Position 141 is a phosphoserine (Ser-141). 2 interaction with CDK2 regions span residues 163 to 171 (EYVKDIYAY) and 252 to 255 (YEEM). Position 315 is a phosphothreonine (Thr-315).

It belongs to the cyclin family. Cyclin AB subfamily. In terms of assembly, interacts with the CDC2 protein kinase to form a serine/threonine kinase holoenzyme complex also known as maturation promoting factor (MPF). The cyclin subunit imparts substrate specificity to the complex. Binds HEI10. Interacts with catalytically active RALBP1 and CDC2 during mitosis to form an endocytotic complex during interphase. Interacts with CCNF; interaction is required for nuclear localization. Interacts with CDK5RAP3. Interacts with RFPL4A and UBE2A. Interacts with INCA1. Ubiquitinated by the SCF(NIPA) complex during interphase, leading to its destruction. Deubiquitinated by USP22 during G2/M phase. Post-translationally, phosphorylated by PLK1 at Ser-127 on centrosomes during prophase: phosphorylation by PLK1 does not cause nuclear import. Phosphorylation at Ser-141 was also reported to be mediated by PLK1 but Ser-127 seems to be the primary phosphorylation site.

It localises to the cytoplasm. The protein resides in the nucleus. The protein localises to the cytoskeleton. It is found in the microtubule organizing center. Its subcellular location is the centrosome. In terms of biological role, essential for the control of the cell cycle at the G2/M (mitosis) transition. The protein is G2/mitotic-specific cyclin-B1 (CCNB1) of Bos taurus (Bovine).